Reading from the N-terminus, the 476-residue chain is Serine/threonine-protein kinase chk-2 (476 aa).

The 62-residue stretch at 66–127 (FVCGRGSDDA…NGTLVNQEMI (62 aa)) folds into the FHA domain. In terms of domain architecture, Protein kinase spans 170-436 (HVTSHSLGKG…AVELMSTQWM (267 aa)). ATP-binding positions include 177-184 (GKGGFGKV), lysine 199, and 252-258 (EYVGGGE). Catalysis depends on aspartate 301, which acts as the Proton acceptor. ATP contacts are provided by residues 305–306 (EN) and aspartate 322.

This sequence belongs to the protein kinase superfamily. CAMK Ser/Thr protein kinase family. CHK2 subfamily. Mg(2+) serves as cofactor. In terms of tissue distribution, highly expressed in germline tissue.

The protein localises to the nucleus. It catalyses the reaction L-seryl-[protein] + ATP = O-phospho-L-seryl-[protein] + ADP + H(+). The catalysed reaction is L-threonyl-[protein] + ATP = O-phospho-L-threonyl-[protein] + ADP + H(+). Functionally, serine/threonine-protein kinase which is required for checkpoint-mediated cell cycle arrest, activation of DNA repair and apoptosis in response to the presence of DNA double-strand breaks. May also negatively regulate cell cycle progression during unperturbed cell cycles. Phosphorylates and inhibits cdc25 phosphatase, preventing entry into mitosis. Required for nuclear reorganization and homologous chromosome pairing during meiotic prophase. This chain is Serine/threonine-protein kinase chk-2 (chk-2), found in Caenorhabditis elegans.